Reading from the N-terminus, the 115-residue chain is NAD(P)H-quinone oxidoreductase subunit M (115 aa).

It belongs to the complex I NdhM subunit family. As to quaternary structure, NDH-1 can be composed of about 15 different subunits; different subcomplexes with different compositions have been identified which probably have different functions.

The protein resides in the cellular thylakoid membrane. The catalysed reaction is a plastoquinone + NADH + (n+1) H(+)(in) = a plastoquinol + NAD(+) + n H(+)(out). It catalyses the reaction a plastoquinone + NADPH + (n+1) H(+)(in) = a plastoquinol + NADP(+) + n H(+)(out). Functionally, NDH-1 shuttles electrons from an unknown electron donor, via FMN and iron-sulfur (Fe-S) centers, to quinones in the respiratory and/or the photosynthetic chain. The immediate electron acceptor for the enzyme in this species is believed to be plastoquinone. Couples the redox reaction to proton translocation, and thus conserves the redox energy in a proton gradient. Cyanobacterial NDH-1 also plays a role in inorganic carbon-concentration. This is NAD(P)H-quinone oxidoreductase subunit M from Prochlorococcus marinus (strain MIT 9515).